The sequence spans 159 residues: 2-C-methyl-D-erythritol 2,4-cyclodiphosphate synthase (159 aa).

2 residues coordinate a divalent metal cation: D10 and H12. 4-CDP-2-C-methyl-D-erythritol 2-phosphate is bound by residues 10 to 12 and 37 to 38; these read DVH and HS. H45 is an a divalent metal cation binding site. 4-CDP-2-C-methyl-D-erythritol 2-phosphate-binding positions include 59–61, 64–68, 103–109, 135–138, F142, and R145; these read DIG, FLDTD, AQAPKML, and TTTE.

The protein belongs to the IspF family. In terms of assembly, homotrimer. A divalent metal cation is required as a cofactor.

The catalysed reaction is 4-CDP-2-C-methyl-D-erythritol 2-phosphate = 2-C-methyl-D-erythritol 2,4-cyclic diphosphate + CMP. The protein operates within isoprenoid biosynthesis; isopentenyl diphosphate biosynthesis via DXP pathway; isopentenyl diphosphate from 1-deoxy-D-xylulose 5-phosphate: step 4/6. Functionally, involved in the biosynthesis of isopentenyl diphosphate (IPP) and dimethylallyl diphosphate (DMAPP), two major building blocks of isoprenoid compounds. Catalyzes the conversion of 4-diphosphocytidyl-2-C-methyl-D-erythritol 2-phosphate (CDP-ME2P) to 2-C-methyl-D-erythritol 2,4-cyclodiphosphate (ME-CPP) with a corresponding release of cytidine 5-monophosphate (CMP). This chain is 2-C-methyl-D-erythritol 2,4-cyclodiphosphate synthase, found in Francisella tularensis subsp. holarctica (strain OSU18).